Consider the following 100-residue polypeptide: NADH-quinone oxidoreductase subunit K (100 aa).

3 consecutive transmembrane segments (helical) span residues 1–21, 28–48, and 64–84; these read MIGL…GLAG, ILLL…GFIA, and FIIA…ILWF.

The protein belongs to the complex I subunit 4L family. In terms of assembly, NDH-1 is composed of 14 different subunits. Subunits NuoA, H, J, K, L, M, N constitute the membrane sector of the complex.

It is found in the cell inner membrane. The catalysed reaction is a quinone + NADH + 5 H(+)(in) = a quinol + NAD(+) + 4 H(+)(out). Functionally, NDH-1 shuttles electrons from NADH, via FMN and iron-sulfur (Fe-S) centers, to quinones in the respiratory chain. The immediate electron acceptor for the enzyme in this species is believed to be ubiquinone. Couples the redox reaction to proton translocation (for every two electrons transferred, four hydrogen ions are translocated across the cytoplasmic membrane), and thus conserves the redox energy in a proton gradient. The chain is NADH-quinone oxidoreductase subunit K from Helicobacter acinonychis (strain Sheeba).